Reading from the N-terminus, the 448-residue chain is N-succinylarginine dihydrolase (448 aa).

Substrate contacts are provided by residues 19–28 (GGLSYGNVAS), asparagine 110, and 137–138 (HR). Glutamate 174 is a catalytic residue. Substrate is bound at residue arginine 214. Histidine 250 is an active-site residue. The substrate site is built by aspartate 252 and asparagine 365. The Nucleophile role is filled by cysteine 371.

Belongs to the succinylarginine dihydrolase family. Homodimer.

The enzyme catalyses N(2)-succinyl-L-arginine + 2 H2O + 2 H(+) = N(2)-succinyl-L-ornithine + 2 NH4(+) + CO2. The protein operates within amino-acid degradation; L-arginine degradation via AST pathway; L-glutamate and succinate from L-arginine: step 2/5. In terms of biological role, catalyzes the hydrolysis of N(2)-succinylarginine into N(2)-succinylornithine, ammonia and CO(2). This chain is N-succinylarginine dihydrolase, found in Pseudomonas savastanoi pv. phaseolicola (strain 1448A / Race 6) (Pseudomonas syringae pv. phaseolicola (strain 1448A / Race 6)).